The following is a 372-amino-acid chain: uncharacterized protein (372 aa).

The first 19 residues, Met-1 to Ser-19, serve as a signal peptide directing secretion. N-linked (GlcNAc...) asparagine glycosylation is present at Asn-18. In terms of domain architecture, MRH spans Ser-20–Ile-160. The cysteines at positions 22 and 58 are disulfide-linked. Asn-59 is a glycosylation site (N-linked (GlcNAc...) asparagine). Cys-128 and Cys-158 form a disulfide bridge. The stretch at Asn-185–Ile-282 forms a coiled coil. Residues Lys-201 to Asn-233 are disordered. Over residues Asn-206–Asn-230 the composition is skewed to low complexity.

The protein localises to the secreted. This is an uncharacterized protein from Dictyostelium discoideum (Social amoeba).